The chain runs to 337 residues: Deoxyhypusine hydroxylase (337 aa).

HEAT-like PBS-type repeat units lie at residues 73–99 and 106–132; these read LKHELAYCLGQTGNTAAVKPLRQVLSD and CRHEAAEALGALGWADNLDILREYRDR. 4 residues coordinate Fe cation: His-75, Glu-76, His-108, and Glu-109. A compositionally biased stretch (basic and acidic residues) spans 156 to 165; sequence AERQKEKLRP. Positions 156–183 are disordered; sequence AERQKEKLRPSDFASIDPAPPMPESDKE. HEAT-like PBS-type repeat units lie at residues 202 to 235, 240 to 266, and 273 to 300; these read SRYRAMFALRDLASPPDLPTATPAVLALAKGLSD, FRHEIAFVFGQLSHPASIPALTEALSN, and VRHEAAEALGSLGEKDGVEDTLRKFLHD. His-242, Glu-243, His-275, and Glu-276 together coordinate Fe cation.

Belongs to the deoxyhypusine hydroxylase family. Fe(2+) is required as a cofactor.

It localises to the cytoplasm. It is found in the nucleus. The catalysed reaction is [eIF5A protein]-deoxyhypusine + AH2 + O2 = [eIF5A protein]-hypusine + A + H2O. It participates in protein modification; eIF5A hypusination. Catalyzes the hydroxylation of the N(6)-(4-aminobutyl)-L-lysine intermediate to form hypusine, an essential post-translational modification only found in mature eIF-5A factor. The protein is Deoxyhypusine hydroxylase of Gibberella zeae (strain ATCC MYA-4620 / CBS 123657 / FGSC 9075 / NRRL 31084 / PH-1) (Wheat head blight fungus).